The following is a 71-amino-acid chain: Large ribosomal subunit protein uL29 (71 aa).

Belongs to the universal ribosomal protein uL29 family.

This chain is Large ribosomal subunit protein uL29 (rpl29), found in Aeropyrum pernix (strain ATCC 700893 / DSM 11879 / JCM 9820 / NBRC 100138 / K1).